The chain runs to 361 residues: 3-dehydroquinate synthase (361 aa).

Residues 72-77 (SGEKEK), 130-131 (TT), K142, and K151 each bind NAD(+). Zn(2+) is bound by residues E184, H247, and H264.

Belongs to the sugar phosphate cyclases superfamily. Dehydroquinate synthase family. NAD(+) serves as cofactor. Co(2+) is required as a cofactor. Requires Zn(2+) as cofactor.

Its subcellular location is the cytoplasm. It carries out the reaction 7-phospho-2-dehydro-3-deoxy-D-arabino-heptonate = 3-dehydroquinate + phosphate. Its pathway is metabolic intermediate biosynthesis; chorismate biosynthesis; chorismate from D-erythrose 4-phosphate and phosphoenolpyruvate: step 2/7. Catalyzes the conversion of 3-deoxy-D-arabino-heptulosonate 7-phosphate (DAHP) to dehydroquinate (DHQ). The polypeptide is 3-dehydroquinate synthase (Bacillus cereus (strain ATCC 14579 / DSM 31 / CCUG 7414 / JCM 2152 / NBRC 15305 / NCIMB 9373 / NCTC 2599 / NRRL B-3711)).